Here is a 597-residue protein sequence, read N- to C-terminus: Phosphoinositide phospholipase C 4 (597 aa).

Residues 26–60 enclose the EF-hand domain; it reads GPVEDVRDLFEKYTEGDAHMSPEQLQKLMTEEGGE. The PI-PLC X-box domain maps to 114 to 257; it reads QNMDAPLSHY…LKEKILISTK (144 aa). Active-site residues include His129 and His174. The span at 259 to 290 shows a compositional bias: basic and acidic residues; sequence PKEYLEANDTKEKDNGEKGKDSDEDVWGKEPE. A disordered region spans residues 259-324; sequence PKEYLEANDT…ERGSCESDTS (66 aa). A compositionally biased stretch (polar residues) spans 293-309; the sequence is ISTQSDLDKVTSSVNDL. The region spanning 333 to 449 is the PI-PLC Y-box domain; it reads KRLIAIHAGK…GYVKKPDFLM (117 aa). Positions 449-579 constitute a C2 domain; the sequence is MDASPNGQDF…QGIRAVPLFN (131 aa).

Ca(2+) serves as cofactor. As to expression, low expression in leaves, roots, flowers and siliques. Expressed in pollen and in cells of the stigma surface.

The protein resides in the cytoplasm. It is found in the cytosol. The protein localises to the cell membrane. It catalyses the reaction a 1,2-diacyl-sn-glycero-3-phospho-(1D-myo-inositol-4,5-bisphosphate) + H2O = 1D-myo-inositol 1,4,5-trisphosphate + a 1,2-diacyl-sn-glycerol + H(+). In terms of biological role, the production of the second messenger molecules diacylglycerol (DAG) and inositol 1,4,5-trisphosphate (IP3) is mediated by activated phosphatidylinositol-specific phospholipase C enzymes. The protein is Phosphoinositide phospholipase C 4 (PLC4) of Arabidopsis thaliana (Mouse-ear cress).